The following is a 329-amino-acid chain: CDP-diacylglycerol--glycerol-3-phosphate 3-phosphatidyltransferase 1, chloroplastic (329 aa).

The N-terminal 38 residues, 1–38 (MAFLKTLNPLLRRSPTPIPNPRSLLSLDAFLAASSPTA), are a transit peptide targeting the chloroplast. Helical transmembrane passes span 150-170 (PVIG…TLAL), 190-210 (VFGS…VAIA), 217-237 (LHPG…GGAV), and 300-320 (ITVL…GYGI).

The protein belongs to the CDP-alcohol phosphatidyltransferase class-I family. Mn(2+) serves as cofactor.

The protein localises to the plastid. It is found in the chloroplast membrane. The catalysed reaction is a CDP-1,2-diacyl-sn-glycerol + sn-glycerol 3-phosphate = a 1,2-diacyl-sn-glycero-3-phospho-(1'-sn-glycero-3'-phosphate) + CMP + H(+). The protein operates within phospholipid metabolism; phosphatidylglycerol biosynthesis; phosphatidylglycerol from CDP-diacylglycerol: step 1/2. Its function is as follows. Catalyzes the committed step to the synthesis of the acidic phospholipids. Transfers specifically a phosphatidyl group from CDP-diacylglycerol to glycerol-3-phosphate to form phosphatidylglycerophosphate. In Oryza sativa subsp. japonica (Rice), this protein is CDP-diacylglycerol--glycerol-3-phosphate 3-phosphatidyltransferase 1, chloroplastic.